The chain runs to 141 residues: Large ribosomal subunit protein uL22 (141 aa).

This sequence belongs to the universal ribosomal protein uL22 family. In terms of assembly, part of the 50S ribosomal subunit.

Functionally, this protein binds specifically to 23S rRNA; its binding is stimulated by other ribosomal proteins, e.g. L4, L17, and L20. It is important during the early stages of 50S assembly. It makes multiple contacts with different domains of the 23S rRNA in the assembled 50S subunit and ribosome. The globular domain of the protein is located near the polypeptide exit tunnel on the outside of the subunit, while an extended beta-hairpin is found that lines the wall of the exit tunnel in the center of the 70S ribosome. This is Large ribosomal subunit protein uL22 from Frankia alni (strain DSM 45986 / CECT 9034 / ACN14a).